A 379-amino-acid chain; its full sequence is PqqA peptide cyclase (379 aa).

In terms of domain architecture, Radical SAM core spans 8–220; it reads LPAPIGLLAE…IRVVEEARER (213 aa). 3 residues coordinate [4Fe-4S] cluster: Cys22, Cys26, and Cys29.

The protein belongs to the radical SAM superfamily. PqqE family. As to quaternary structure, interacts with PqqD. The interaction is necessary for activity of PqqE. [4Fe-4S] cluster serves as cofactor.

It carries out the reaction [PQQ precursor protein] + S-adenosyl-L-methionine = E-Y cross-linked-[PQQ precursor protein] + 5'-deoxyadenosine + L-methionine + H(+). The protein operates within cofactor biosynthesis; pyrroloquinoline quinone biosynthesis. In terms of biological role, catalyzes the cross-linking of a glutamate residue and a tyrosine residue in the PqqA protein as part of the biosynthesis of pyrroloquinoline quinone (PQQ). The sequence is that of PqqA peptide cyclase from Methylobacterium sp. (strain 4-46).